The chain runs to 183 residues: Lipid droplet coating protein Cap20 (183 aa).

Belongs to the perilipin family.

Its subcellular location is the lipid droplet. Functionally, lipid droplet coating protein that regulates lipid metabolism, appressorial turgor pressure, and virulence. Appressorial turgor pressure is important for the mechanical penetration of the host cuticle during infection. This is Lipid droplet coating protein Cap20 (Cap20) from Colletotrichum gloeosporioides (Anthracnose fungus).